The primary structure comprises 343 residues: Dihydroorotase (343 aa).

The Zn(2+) site is built by His13 and His15. Residues 15-17 (HLR) and Asn41 each bind substrate. 3 residues coordinate Zn(2+): Lys99, His136, and His174. An N6-carboxylysine modification is found at Lys99. Residue His136 participates in substrate binding. Leu219 provides a ligand contact to substrate. A Zn(2+)-binding site is contributed by Asp247. The active site involves Asp247. Residues His251 and Ala263 each coordinate substrate.

This sequence belongs to the metallo-dependent hydrolases superfamily. DHOase family. Class II DHOase subfamily. In terms of assembly, homodimer. Requires Zn(2+) as cofactor.

It catalyses the reaction (S)-dihydroorotate + H2O = N-carbamoyl-L-aspartate + H(+). It functions in the pathway pyrimidine metabolism; UMP biosynthesis via de novo pathway; (S)-dihydroorotate from bicarbonate: step 3/3. Catalyzes the reversible cyclization of carbamoyl aspartate to dihydroorotate. This chain is Dihydroorotase, found in Shewanella baltica (strain OS223).